The primary structure comprises 190 residues: Threonylcarbamoyl-AMP synthase (190 aa).

The 184-residue stretch at 7-190 (TGSIAAVVDL…ALTGELFRQG (184 aa)) folds into the YrdC-like domain.

The protein belongs to the SUA5 family. TsaC subfamily.

It is found in the cytoplasm. It carries out the reaction L-threonine + hydrogencarbonate + ATP = L-threonylcarbamoyladenylate + diphosphate + H2O. Functionally, required for the formation of a threonylcarbamoyl group on adenosine at position 37 (t(6)A37) in tRNAs that read codons beginning with adenine. Catalyzes the conversion of L-threonine, HCO(3)(-)/CO(2) and ATP to give threonylcarbamoyl-AMP (TC-AMP) as the acyladenylate intermediate, with the release of diphosphate. This is Threonylcarbamoyl-AMP synthase from Salmonella paratyphi A (strain ATCC 9150 / SARB42).